The sequence spans 154 residues: Low molecular weight protein-tyrosine-phosphatase PtpA (154 aa).

Residue Cys-8 is the Nucleophile of the active site. Arg-14 is an active-site residue. Asp-120 functions as the Proton donor in the catalytic mechanism.

Belongs to the low molecular weight phosphotyrosine protein phosphatase family.

The catalysed reaction is O-phospho-L-tyrosyl-[protein] + H2O = L-tyrosyl-[protein] + phosphate. In terms of biological role, dephosphorylates the phosphotyrosine-containing proteins. The protein is Low molecular weight protein-tyrosine-phosphatase PtpA (ptpA) of Staphylococcus haemolyticus (strain JCSC1435).